Consider the following 64-residue polypeptide: U9-ctenitoxin-Pr1a (64 aa).

5 cysteine pairs are disulfide-bonded: Cys-3-Cys-15, Cys-9-Cys-24, Cys-14-Cys-47, Cys-34-Cys-55, and Cys-49-Cys-61.

As to expression, expressed by the venom gland.

It is found in the secreted. Its function is as follows. Non-toxic to mice and insects. This Phoneutria reidyi (Brazilian Amazonian armed spider) protein is U9-ctenitoxin-Pr1a.